Here is a 116-residue protein sequence, read N- to C-terminus: Putative antiporter subunit mnhC2 (116 aa).

3 helical membrane passes run 3 to 23, 28 to 48, and 72 to 92; these read LILL…ILSL, IVIG…SMGH, and AIVL…LVLV.

Belongs to the CPA3 antiporters (TC 2.A.63) subunit C family. May form a heterooligomeric complex that consists of seven subunits: mnhA2, mnhB2, mnhC2, mnhD2, mnhE2, mnhF2 and mnhG2.

It localises to the cell membrane. The polypeptide is Putative antiporter subunit mnhC2 (mnhC2) (Staphylococcus haemolyticus (strain JCSC1435)).